The sequence spans 512 residues: Maturase K (512 aa).

This sequence belongs to the intron maturase 2 family. MatK subfamily.

Its subcellular location is the plastid. The protein localises to the chloroplast. Usually encoded in the trnK tRNA gene intron. Probably assists in splicing its own and other chloroplast group II introns. The protein is Maturase K of Lemna minor (Common duckweed).